The following is a 174-amino-acid chain: 3-hydroxyanthranilate 3,4-dioxygenase (174 aa).

Arg47 is an O2 binding site. Fe cation-binding residues include His51, Glu57, and His95. Position 57 (Glu57) interacts with substrate. Positions 99 and 110 each coordinate substrate. Residues Cys125, Cys128, Cys162, and Cys165 each coordinate Fe cation.

It belongs to the 3-HAO family. In terms of assembly, homodimer. Requires Fe(2+) as cofactor.

The catalysed reaction is 3-hydroxyanthranilate + O2 = (2Z,4Z)-2-amino-3-carboxymuconate 6-semialdehyde. Its pathway is cofactor biosynthesis; NAD(+) biosynthesis; quinolinate from L-kynurenine: step 3/3. Inhibited by 4-chloro-3-hydroxyanthranilate. Mechanism of inactivation involves the oxidation of the catalytic active site Fe(2+) to the catalytically inactive Fe(3+) oxidation state, superoxide production, and formation of two disulfide bonds between Cys-125 and Cys-128, and Cys-162 and Cys-165. Enzyme can be reactivated under reducing conditions. Functionally, catalyzes the oxidative ring opening of 3-hydroxyanthranilate to 2-amino-3-carboxymuconate semialdehyde, which spontaneously cyclizes to quinolinate. This Cupriavidus metallidurans (strain ATCC 43123 / DSM 2839 / NBRC 102507 / CH34) (Ralstonia metallidurans) protein is 3-hydroxyanthranilate 3,4-dioxygenase.